A 313-amino-acid chain; its full sequence is Ribosomal RNA small subunit methyltransferase H (313 aa).

Residues 35–37 (GGY), D53, F80, D101, and Q108 each bind S-adenosyl-L-methionine.

Belongs to the methyltransferase superfamily. RsmH family.

It is found in the cytoplasm. It carries out the reaction cytidine(1402) in 16S rRNA + S-adenosyl-L-methionine = N(4)-methylcytidine(1402) in 16S rRNA + S-adenosyl-L-homocysteine + H(+). Functionally, specifically methylates the N4 position of cytidine in position 1402 (C1402) of 16S rRNA. This chain is Ribosomal RNA small subunit methyltransferase H, found in Acidiphilium cryptum (strain JF-5).